Here is a 525-residue protein sequence, read N- to C-terminus: GMP synthase [glutamine-hydrolyzing] (525 aa).

One can recognise a Glutamine amidotransferase type-1 domain in the interval 9–207 (RILILDFGSQ…VRDICQCEAL (199 aa)). Cys86 functions as the Nucleophile in the catalytic mechanism. Catalysis depends on residues His181 and Glu183. One can recognise a GMPS ATP-PPase domain in the interval 208–400 (WTPAKIIDDA…LGLPYDMLYR (193 aa)). ATP is bound at residue 235-241 (SGGVDSS).

In terms of assembly, homodimer.

It carries out the reaction XMP + L-glutamine + ATP + H2O = GMP + L-glutamate + AMP + diphosphate + 2 H(+). It participates in purine metabolism; GMP biosynthesis; GMP from XMP (L-Gln route): step 1/1. Functionally, catalyzes the synthesis of GMP from XMP. The sequence is that of GMP synthase [glutamine-hydrolyzing] from Escherichia coli O17:K52:H18 (strain UMN026 / ExPEC).